The following is an 88-amino-acid chain: KTx type I (88 aa).

An N-terminal signal peptide occupies residues 1-19; sequence MKTTLVVVVLACIVALTSA. In terms of domain architecture, ShKT spans 54–88; sequence CKDVLSEFSCGVLKKDGQCNKADIQAKCKLTCDKC. 3 cysteine pairs are disulfide-bonded: Cys-54/Cys-88, Cys-63/Cys-81, and Cys-72/Cys-85.

The protein belongs to the sea anemone type 1 potassium channel toxin family. As to expression, expressed both outside and in acontia, a specialised envenomation structure laden with batteries of venom-containing nematocysts found only in the superfamily Metridioidea.

It localises to the secreted. The protein localises to the nematocyst. Its function is as follows. Inhibits voltage-gated potassium channels (Kv1/KCNA). The chain is KTx type I from Calliactis polypus (Hermit crab anemone).